Here is a 79-residue protein sequence, read N- to C-terminus: Pulmonary surfactant-associated protein B (79 aa).

The Saposin B-type domain occupies 4–79; that stretch reads PLPFCWLCRT…VCGLVLRCSS (76 aa). Disulfide bonds link Cys8–Cys77, Cys11–Cys71, and Cys35–Cys46.

In terms of assembly, homodimer; disulfide-linked.

The protein resides in the secreted. It is found in the extracellular space. It localises to the surface film. Functionally, pulmonary surfactant-associated proteins promote alveolar stability by lowering the surface tension at the air-liquid interface in the peripheral air spaces. SP-B increases the collapse pressure of palmitic acid to nearly 70 millinewtons per meter. The protein is Pulmonary surfactant-associated protein B (SFTPB) of Sus scrofa (Pig).